The sequence spans 117 residues: Large ribosomal subunit protein uL18 (117 aa).

It belongs to the universal ribosomal protein uL18 family. In terms of assembly, part of the 50S ribosomal subunit; part of the 5S rRNA/L5/L18/L25 subcomplex. Contacts the 5S and 23S rRNAs.

Its function is as follows. This is one of the proteins that bind and probably mediate the attachment of the 5S RNA into the large ribosomal subunit, where it forms part of the central protuberance. This chain is Large ribosomal subunit protein uL18, found in Phytoplasma mali (strain AT).